The primary structure comprises 313 residues: Probable F-box protein At3g44130 (313 aa).

The F-box domain occupies 1 to 46 (MASGNLPWELEEEILCRLPLGSLVRLRSVCKHWNDFFNDKWFIKKS).

The polypeptide is Probable F-box protein At3g44130 (Arabidopsis thaliana (Mouse-ear cress)).